Reading from the N-terminus, the 124-residue chain is Small ribosomal subunit protein uS12 (124 aa).

The residue at position 90 (D90) is a 3-methylthioaspartic acid.

Belongs to the universal ribosomal protein uS12 family. As to quaternary structure, part of the 30S ribosomal subunit. Contacts proteins S8 and S17. May interact with IF1 in the 30S initiation complex.

Its function is as follows. With S4 and S5 plays an important role in translational accuracy. Interacts with and stabilizes bases of the 16S rRNA that are involved in tRNA selection in the A site and with the mRNA backbone. Located at the interface of the 30S and 50S subunits, it traverses the body of the 30S subunit contacting proteins on the other side and probably holding the rRNA structure together. The combined cluster of proteins S8, S12 and S17 appears to hold together the shoulder and platform of the 30S subunit. This is Small ribosomal subunit protein uS12 from Wolbachia pipientis subsp. Culex pipiens (strain wPip).